The following is a 198-amino-acid chain: Dephospho-CoA kinase (198 aa).

The region spanning Val3–Ala198 is the DPCK domain. Gly11–Thr16 is an ATP binding site.

It belongs to the CoaE family.

The protein resides in the cytoplasm. The enzyme catalyses 3'-dephospho-CoA + ATP = ADP + CoA + H(+). It participates in cofactor biosynthesis; coenzyme A biosynthesis; CoA from (R)-pantothenate: step 5/5. Catalyzes the phosphorylation of the 3'-hydroxyl group of dephosphocoenzyme A to form coenzyme A. The chain is Dephospho-CoA kinase from Methylococcus capsulatus (strain ATCC 33009 / NCIMB 11132 / Bath).